The primary structure comprises 603 residues: Elongation factor 4 (603 aa).

Residues 7-189 (SRIRNFSIIA…AIVQQVPPPA (183 aa)) enclose the tr-type G domain. Residues 19-24 (DHGKST) and 136-139 (NKID) contribute to the GTP site.

The protein belongs to the TRAFAC class translation factor GTPase superfamily. Classic translation factor GTPase family. LepA subfamily.

It localises to the cell inner membrane. The enzyme catalyses GTP + H2O = GDP + phosphate + H(+). Its function is as follows. Required for accurate and efficient protein synthesis under certain stress conditions. May act as a fidelity factor of the translation reaction, by catalyzing a one-codon backward translocation of tRNAs on improperly translocated ribosomes. Back-translocation proceeds from a post-translocation (POST) complex to a pre-translocation (PRE) complex, thus giving elongation factor G a second chance to translocate the tRNAs correctly. Binds to ribosomes in a GTP-dependent manner. This chain is Elongation factor 4, found in Synechocystis sp. (strain ATCC 27184 / PCC 6803 / Kazusa).